Here is a 465-residue protein sequence, read N- to C-terminus: Methionine aminopeptidase 2-1 (465 aa).

The tract at residues 1–100 (MGSKTAENES…QSSPPRIPLA (100 aa)) is disordered. Over residues 31–40 (RGAHWSRDGD) the composition is skewed to basic and acidic residues. Over residues 75-87 (SKKRKKRPKKKTS) the composition is skewed to basic residues. A substrate-binding site is contributed by histidine 216. A divalent metal cation-binding residues include aspartate 237, aspartate 248, and histidine 317. Residue histidine 325 participates in substrate binding. 2 residues coordinate a divalent metal cation: glutamate 350 and glutamate 446.

This sequence belongs to the peptidase M24A family. Methionine aminopeptidase eukaryotic type 2 subfamily. The cofactor is Co(2+). Requires Zn(2+) as cofactor. Mn(2+) serves as cofactor. It depends on Fe(2+) as a cofactor.

The protein localises to the cytoplasm. It carries out the reaction Release of N-terminal amino acids, preferentially methionine, from peptides and arylamides.. In terms of biological role, cotranslationally removes the N-terminal methionine from nascent proteins. The N-terminal methionine is often cleaved when the second residue in the primary sequence is small and uncharged (Met-Ala-, Cys, Gly, Pro, Ser, Thr, or Val). This chain is Methionine aminopeptidase 2-1, found in Penicillium rubens (strain ATCC 28089 / DSM 1075 / NRRL 1951 / Wisconsin 54-1255) (Penicillium chrysogenum).